Here is a 410-residue protein sequence, read N- to C-terminus: MKKEVVVIGGGIVGLSCAYSMHKLGHKVCVIEKSDGTNGTSFGNAGLISAFKKAPLSCPGVVLDTLKLMLKNQAPLKFHFGLNLKLYQWILKFMTSANAKSTHRTIALFERYGWLSIDMYHQMLKDGMDFWYKEDGLLMIYTLEESFEKKLKTCDNSGAYKILNVKETKEYMPIANDNICGSVLLTENAHVDPGEVVRSLQQYLQNAGVEFLYNEEVIDFEFKNNLIEGVITHKEKIQAETIILATGANPTLIKKTKNDFLMMGAKGYSITFKMPEELKPKTSSLFADIFMAMTPRRDTVRITSKLELNTNNALIDKEQIANMKKNLAAFTQPFEMKDAIEWCGFRPLTPNDIPYLGYDKRYKNLIHATGLGWLGITFGPAIGKIIANLSQDGANEKNADIMLFSAFFRD.

9 to 14 (GGGIVG) is an FAD binding site.

It belongs to the DadA oxidoreductase family. It depends on FAD as a cofactor.

It is found in the cell inner membrane. It carries out the reaction a D-alpha-amino acid + a quinone + H2O = a 2-oxocarboxylate + a quinol + NH4(+). Catalyzes the oxidative deamination of D-amino acids. Has broad substrate specificity; is mostly active on D-proline, and to a lesser extent, on several other D-amino acids such as D-alanine, D-phenylalanine and D-serine. Mediates electron transport from D-proline to coenzyme Q1 in vitro, and is involved in the electron transport chain from D-proline to the c-type cytochrome in vivo. The sequence is that of D-amino acid dehydrogenase from Helicobacter pylori (strain J99 / ATCC 700824) (Campylobacter pylori J99).